The following is a 389-amino-acid chain: S-adenosylmethionine synthase (389 aa).

Histidine 15 is a binding site for ATP. Aspartate 17 provides a ligand contact to Mg(2+). Glutamate 43 contacts K(+). Positions 56 and 99 each coordinate L-methionine. The segment at 99 to 109 (QSPDIAQGVNE) is flexible loop. ATP-binding positions include 166–168 (DAK), 234–235 (RF), aspartate 243, 249–250 (RK), alanine 266, and lysine 270. Aspartate 243 is an L-methionine binding site. Lysine 274 lines the L-methionine pocket.

This sequence belongs to the AdoMet synthase family. As to quaternary structure, homotetramer; dimer of dimers. The cofactor is Mg(2+). K(+) is required as a cofactor.

It is found in the cytoplasm. It catalyses the reaction L-methionine + ATP + H2O = S-adenosyl-L-methionine + phosphate + diphosphate. The protein operates within amino-acid biosynthesis; S-adenosyl-L-methionine biosynthesis; S-adenosyl-L-methionine from L-methionine: step 1/1. Its function is as follows. Catalyzes the formation of S-adenosylmethionine (AdoMet) from methionine and ATP. The overall synthetic reaction is composed of two sequential steps, AdoMet formation and the subsequent tripolyphosphate hydrolysis which occurs prior to release of AdoMet from the enzyme. This Neisseria gonorrhoeae (strain NCCP11945) protein is S-adenosylmethionine synthase.